A 150-amino-acid chain; its full sequence is Flagellar assembly factor FliW (150 aa).

Belongs to the FliW family. In terms of assembly, interacts with translational regulator CsrA and flagellin(s).

It is found in the cytoplasm. Functionally, acts as an anti-CsrA protein, binds CsrA and prevents it from repressing translation of its target genes, one of which is flagellin. Binds to flagellin and participates in the assembly of the flagellum. This is Flagellar assembly factor FliW from Leptospira interrogans serogroup Icterohaemorrhagiae serovar copenhageni (strain Fiocruz L1-130).